The chain runs to 97 residues: Defensin alpha 4 (97 aa).

The first 19 residues, 1 to 19, serve as a signal peptide directing secretion; that stretch reads MRIIAILAAILLVALQVRA. Residues 20–63 constitute a propeptide that is removed on maturation; sequence GPLQARGDEAPGQEQRGPEDQDISISFAWDKSSALQVSGSTRGM. Intrachain disulfides connect Cys65-Cys93, Cys67-Cys82, and Cys72-Cys92. Asp97 is a propeptide.

It belongs to the alpha-defensin family. As to quaternary structure, homodimer; homodimerization seems to be required for killing S.aureus, but not E.coli. Interacts with CD4. Interacts with Bacillus anthracis lef; homodimerization is required for the interaction. The three-dimensional structure formed by the three intramolecular disulfide bridges is indispensable for effective bacterial killing.

The protein resides in the secreted. Its subcellular location is the cytoplasmic vesicle. The protein localises to the secretory vesicle. Functionally, host-defense peptide that has antimicrobial activity against Gram-negative bacteria, and to a lesser extent also against Gram-positive bacteria and fungi. Exhibits antimicrobial activity against Gram-negative E.coli and E.aerogenes and Gram-positive S.faecalis, S.aureus and B.cereus and the yeast C.albicans (in vitro). Inhibits corticotropin (ACTH)-stimulated corticosterone production (in vitro). Inhibits enzymatic activity of B.anthracis lef/anthrax lethal factor (in vitro). This Pan troglodytes (Chimpanzee) protein is Defensin alpha 4 (DEFA4).